Reading from the N-terminus, the 308-residue chain is Low density lipoprotein receptor adapter protein 1 (308 aa).

Met1 is modified (N-acetylmethionine). Phosphoserine is present on Ser14. A PID domain is found at 41 to 195; the sequence is LLEGMVFSLK…QEGGDVPGTR (155 aa). The interval 179 to 201 is disordered; sequence EKREKANQEGGDVPGTRRDSTPS. Phosphoserine occurs at positions 198 and 201. Residues 211-215 carry the Clathrin box motif; sequence LLDLE. The interval 248 to 275 is AP-2 complex binding; that stretch reads WELDDGLDEAFSRLAQSRTNPQVLDTGL. The [DE]-X(1,2)-F-X-X-[FL]-X-X-X-R motif signature appears at 256 to 265; it reads EAFSRLAQSR. Residues 288-308 form a disordered region; sequence PTDWDKPDSSGIDQDDDVFTF.

Interacts (via PID domain) with LDLR (via NPXY motif). Binds to soluble clathrin trimers. Interacts with AP2B1; the interaction mediates the association with the AP-2 complex. Interacts with VLDLR. Interacts with LRP2.

It is found in the cytoplasm. Adapter protein (clathrin-associated sorting protein (CLASP)) required for efficient endocytosis of the LDL receptor (LDLR) in polarized cells such as hepatocytes and lymphocytes, but not in non-polarized cells (fibroblasts). May be required for LDL binding and internalization but not for receptor clustering in coated pits. May facilitate the endocytosis of LDLR and LDLR-LDL complexes from coated pits by stabilizing the interaction between the receptor and the structural components of the pits. May also be involved in the internalization of other LDLR family members. Binds to phosphoinositides, which regulate clathrin bud assembly at the cell surface. Required for trafficking of LRP2 to the endocytic recycling compartment which is necessary for LRP2 proteolysis, releasing a tail fragment which translocates to the nucleus and mediates transcriptional repression. This Mus musculus (Mouse) protein is Low density lipoprotein receptor adapter protein 1.